The sequence spans 310 residues: Ribose-phosphate pyrophosphokinase (310 aa).

Residues Asp-34–Glu-36 and Arg-93–Gln-94 each bind ATP. 2 residues coordinate Mg(2+): His-127 and Asp-167. Residue Lys-190 is part of the active site. D-ribose 5-phosphate contacts are provided by residues Arg-192, Asp-216, and Asp-220 to Thr-224.

It belongs to the ribose-phosphate pyrophosphokinase family. Class I subfamily. As to quaternary structure, homohexamer. Mg(2+) serves as cofactor.

Its subcellular location is the cytoplasm. It carries out the reaction D-ribose 5-phosphate + ATP = 5-phospho-alpha-D-ribose 1-diphosphate + AMP + H(+). Its pathway is metabolic intermediate biosynthesis; 5-phospho-alpha-D-ribose 1-diphosphate biosynthesis; 5-phospho-alpha-D-ribose 1-diphosphate from D-ribose 5-phosphate (route I): step 1/1. In terms of biological role, involved in the biosynthesis of the central metabolite phospho-alpha-D-ribosyl-1-pyrophosphate (PRPP) via the transfer of pyrophosphoryl group from ATP to 1-hydroxyl of ribose-5-phosphate (Rib-5-P). The sequence is that of Ribose-phosphate pyrophosphokinase from Rhizobium meliloti (strain 1021) (Ensifer meliloti).